The sequence spans 105 residues: Cell division protein FtsB (105 aa).

Over 1–3 (MKP) the chain is Cytoplasmic. Residues 4-21 (FVLVLFALLALLQYRLWF) traverse the membrane as a helical segment. Residues 22–105 (GENSLTEYFT…RSSEQSQDNQ (84 aa)) lie on the Periplasmic side of the membrane. Residues 38-75 (HQQSGNAELLERNEVLKEEIQDLKSGTEALEERARNEL) adopt a coiled-coil conformation.

The protein belongs to the FtsB family. Part of a complex composed of FtsB, FtsL and FtsQ.

It localises to the cell inner membrane. Functionally, essential cell division protein. May link together the upstream cell division proteins, which are predominantly cytoplasmic, with the downstream cell division proteins, which are predominantly periplasmic. This Shewanella amazonensis (strain ATCC BAA-1098 / SB2B) protein is Cell division protein FtsB.